A 171-amino-acid polypeptide reads, in one-letter code: 3-hydroxydecanoyl-[acyl-carrier-protein] dehydratase (171 aa).

H70 is a catalytic residue.

It belongs to the thioester dehydratase family. FabA subfamily. As to quaternary structure, homodimer.

Its subcellular location is the cytoplasm. The enzyme catalyses a (3R)-hydroxyacyl-[ACP] = a (2E)-enoyl-[ACP] + H2O. The catalysed reaction is (3R)-hydroxydecanoyl-[ACP] = (2E)-decenoyl-[ACP] + H2O. It carries out the reaction (2E)-decenoyl-[ACP] = (3Z)-decenoyl-[ACP]. It functions in the pathway lipid metabolism; fatty acid biosynthesis. Necessary for the introduction of cis unsaturation into fatty acids. Catalyzes the dehydration of (3R)-3-hydroxydecanoyl-ACP to E-(2)-decenoyl-ACP and then its isomerization to Z-(3)-decenoyl-ACP. Can catalyze the dehydratase reaction for beta-hydroxyacyl-ACPs with saturated chain lengths up to 16:0, being most active on intermediate chain length. The sequence is that of 3-hydroxydecanoyl-[acyl-carrier-protein] dehydratase from Shewanella loihica (strain ATCC BAA-1088 / PV-4).